The primary structure comprises 292 residues: AhcY transcriptional activator HvrB (292 aa).

In terms of domain architecture, HTH lysR-type spans 10 to 67 (PPLTALRAFAATASEGGFSAAARKLNVTHAAIAQQVRALEADLDVPLVWRDGKHLHLT). Residues 27 to 46 (FSAAARKLNVTHAAIAQQVR) constitute a DNA-binding region (H-T-H motif).

Belongs to the LysR transcriptional regulatory family.

Its function is as follows. Functions as a low-light activator of ahcY expression (gene for S-adenosyl-L-homocysteine hydrolase) and as a high-light activator of an uncharacterized 21.6 kDa protein in the ahcY-hvrB intergenic region (orf5). It is also a negative regulator of its own expression. The polypeptide is AhcY transcriptional activator HvrB (hvrB) (Rhodobacter capsulatus (strain ATCC BAA-309 / NBRC 16581 / SB1003)).